An 844-amino-acid chain; its full sequence is SWI/SNF-related matrix-associated actin-dependent regulator of chromatin subfamily A containing DEAD/H box 1 homolog (844 aa).

Residues 1–23 show a composition bias toward low complexity; it reads MSDSTVAASASASASSSAKSSLS. Disordered stretches follow at residues 1 to 75 and 121 to 180; these read MSDS…TKLE and NCKP…STKM. A compositionally biased stretch (polar residues) spans 30–42; the sequence is INKNASSVVASPS. Residues 301-471 enclose the Helicase ATP-binding domain; the sequence is TVMHKQEMNG…ISLLCFVMPK (171 aa). 314-321 contributes to the ATP binding site; that stretch reads DEMGLGKT. The DEGH box motif lies at 422–425; it reads DEAH. Residues 656–818 enclose the Helicase C-terminal domain; sequence YLDTLLPKLK…EQRCVVKLLT (163 aa). A phosphoserine mark is found at serine 834, serine 838, and serine 841.

This sequence belongs to the SNF2/RAD54 helicase family.

Its subcellular location is the nucleus. The catalysed reaction is ATP + H2O = ADP + phosphate + H(+). Functionally, DNA helicase that possesses intrinsic ATP-dependent nucleosome-remodeling activity and is both required for DNA repair and heterochromatin organization. Promotes DNA end resection of double-strand breaks (DSBs) following DNA damage: probably acts by weakening histone DNA interactions in nucleosomes flanking DSBs. The chain is SWI/SNF-related matrix-associated actin-dependent regulator of chromatin subfamily A containing DEAD/H box 1 homolog (Etl1) from Drosophila melanogaster (Fruit fly).